The following is a 139-amino-acid chain: MKPAARRRARECAVQALYSWQLSHNDIADVEYQFLAEQDVKDVDVMYFRELLSGVATNSGYLDGLMKPYLSRQLEELGQVEKAVLRIALFELSKRDDVPYKVAINEAIELAKVFGAEDSHKFVNGVLDKAAPHIRPNKK.

Belongs to the NusB family.

In terms of biological role, involved in transcription antitermination. Required for transcription of ribosomal RNA (rRNA) genes. Binds specifically to the boxA antiterminator sequence of the ribosomal RNA (rrn) operons. The sequence is that of Transcription antitermination protein NusB from Cronobacter sakazakii (strain ATCC BAA-894) (Enterobacter sakazakii).